We begin with the raw amino-acid sequence, 420 residues long: UDP-N-acetylglucosamine 1-carboxyvinyltransferase (420 aa).

Residue 22-23 (KN) coordinates phosphoenolpyruvate. Arg-93 contributes to the UDP-N-acetyl-alpha-D-glucosamine binding site. Cys-117 serves as the catalytic Proton donor. Cys-117 carries the post-translational modification 2-(S-cysteinyl)pyruvic acid O-phosphothioketal. UDP-N-acetyl-alpha-D-glucosamine-binding residues include Asp-307 and Ile-329.

It belongs to the EPSP synthase family. MurA subfamily.

It localises to the cytoplasm. The catalysed reaction is phosphoenolpyruvate + UDP-N-acetyl-alpha-D-glucosamine = UDP-N-acetyl-3-O-(1-carboxyvinyl)-alpha-D-glucosamine + phosphate. Its pathway is cell wall biogenesis; peptidoglycan biosynthesis. Functionally, cell wall formation. Adds enolpyruvyl to UDP-N-acetylglucosamine. This is UDP-N-acetylglucosamine 1-carboxyvinyltransferase from Cellvibrio japonicus (strain Ueda107) (Pseudomonas fluorescens subsp. cellulosa).